The primary structure comprises 239 residues: Aspartate/glutamate leucyltransferase (239 aa).

It belongs to the R-transferase family. Bpt subfamily.

The protein resides in the cytoplasm. The catalysed reaction is N-terminal L-glutamyl-[protein] + L-leucyl-tRNA(Leu) = N-terminal L-leucyl-L-glutamyl-[protein] + tRNA(Leu) + H(+). The enzyme catalyses N-terminal L-aspartyl-[protein] + L-leucyl-tRNA(Leu) = N-terminal L-leucyl-L-aspartyl-[protein] + tRNA(Leu) + H(+). Its function is as follows. Functions in the N-end rule pathway of protein degradation where it conjugates Leu from its aminoacyl-tRNA to the N-termini of proteins containing an N-terminal aspartate or glutamate. This Campylobacter jejuni subsp. jejuni serotype O:23/36 (strain 81-176) protein is Aspartate/glutamate leucyltransferase.